Consider the following 569-residue polypeptide: Anti-Muellerian hormone type-2 receptor (569 aa).

Positions Met1–Ala17 are cleaved as a signal peptide. Topologically, residues Pro18–Ala148 are extracellular. Cystine bridges form between Cys55–Cys79 and Cys92–Cys109. N-linked (GlcNAc...) asparagine glycosylation occurs at Asn66. N-linked (GlcNAc...) asparagine glycosylation is present at Asn119. Residues Leu149 to Leu169 form a helical membrane-spanning segment. Over Leu170–Val569 the chain is Cytoplasmic. The region spanning Leu201 to Glu511 is the Protein kinase domain. Residues Ile207 to Val215 and Lys228 each bind ATP. The active-site Proton acceptor is Asp331. Positions Ala512 to Pro535 are disordered.

The protein belongs to the protein kinase superfamily. TKL Ser/Thr protein kinase family. TGFB receptor subfamily. Interacts with type I receptor ACVR1. The cofactor is Mg(2+). Mn(2+) is required as a cofactor.

It localises to the membrane. The enzyme catalyses L-threonyl-[receptor-protein] + ATP = O-phospho-L-threonyl-[receptor-protein] + ADP + H(+). The catalysed reaction is L-seryl-[receptor-protein] + ATP = O-phospho-L-seryl-[receptor-protein] + ADP + H(+). On ligand binding, forms a receptor complex consisting of two type II and two type I transmembrane serine/threonine kinases. Type II receptors phosphorylate and activate type I receptors which autophosphorylate, then bind and activate SMAD transcriptional regulators. Receptor for anti-Muellerian hormone. In Oryctolagus cuniculus (Rabbit), this protein is Anti-Muellerian hormone type-2 receptor (AMHR2).